A 188-amino-acid polypeptide reads, in one-letter code: dCTP deaminase, dUMP-forming (188 aa).

DCTP-binding positions include 101–106 (KSSLGR), Asp-119, 127–129 (TLE), Gln-148, Tyr-162, and Gln-174. Catalysis depends on Glu-129, which acts as the Proton donor/acceptor.

The protein belongs to the dCTP deaminase family. As to quaternary structure, homotrimer.

The catalysed reaction is dCTP + 2 H2O = dUMP + NH4(+) + diphosphate. The protein operates within pyrimidine metabolism; dUMP biosynthesis; dUMP from dCTP: step 1/1. Bifunctional enzyme that catalyzes both the deamination of dCTP to dUTP and the hydrolysis of dUTP to dUMP without releasing the toxic dUTP intermediate. In Corynebacterium jeikeium (strain K411), this protein is dCTP deaminase, dUMP-forming.